The following is a 176-amino-acid chain: Neuropeptide-like protein 1 (176 aa).

The N-terminal stretch at 1–19 (MKATFVLACLLVIAAVSHA) is a signal peptide. A disordered region spans residues 59-79 (GKRSAEQNEQANKEDKATSDK). Residues 61–79 (RSAEQNEQANKEDKATSDK) are compositionally biased toward basic and acidic residues.

Its function is as follows. In AWC olfactory sensory neurons, required for the detection of preferred food sources. The chain is Neuropeptide-like protein 1 (nlp-1) from Caenorhabditis elegans.